The chain runs to 267 residues: Glutamate racemase (267 aa).

Substrate contacts are provided by residues 10–11 (DS) and 42–43 (YG). The active-site Proton donor/acceptor is the C73. A substrate-binding site is contributed by 74-75 (NT). C183 functions as the Proton donor/acceptor in the catalytic mechanism. Position 184-185 (184-185 (TH)) interacts with substrate.

It belongs to the aspartate/glutamate racemases family.

The catalysed reaction is L-glutamate = D-glutamate. It participates in cell wall biogenesis; peptidoglycan biosynthesis. Provides the (R)-glutamate required for cell wall biosynthesis. This chain is Glutamate racemase, found in Limosilactobacillus reuteri (strain DSM 20016) (Lactobacillus reuteri).